The following is a 371-amino-acid chain: Cytochrome b (371 aa).

The next 4 membrane-spanning stretches (helical) occupy residues 25–45, 69–90, 105–125, and 170–190; these read FGSMLLTCSALQVMTGFFLSM, WMMQNLHAIGASMFFICIYMHI, WLSGTTLLIMLMATAFFGYVL, and FFALHFILPFGIISMSSVHIM. His75 and His89 together coordinate heme b. The heme b site is built by His174 and His188. Position 193 (His193) interacts with a ubiquinone. A run of 4 helical transmembrane segments spans residues 218–238, 280–300, 312–332, and 339–358; these read YKDLLVISMMIITVLLTVSFF, LGGALALVMSIMILLTMPFTH, LMQFMFWTLVATFTVITWTAT, and FTTISQVASIIYFMFFMSNP.

It belongs to the cytochrome b family. As to quaternary structure, the cytochrome bc1 complex contains 3 respiratory subunits (MT-CYB, CYC1 and UQCRFS1), 2 core proteins (UQCRC1 and UQCRC2) and probably 6 low-molecular weight proteins. It depends on heme b as a cofactor.

The protein resides in the mitochondrion inner membrane. In terms of biological role, component of the ubiquinol-cytochrome c reductase complex (complex III or cytochrome b-c1 complex) that is part of the mitochondrial respiratory chain. The b-c1 complex mediates electron transfer from ubiquinol to cytochrome c. Contributes to the generation of a proton gradient across the mitochondrial membrane that is then used for ATP synthesis. This chain is Cytochrome b (MT-CYB), found in Candoia carinata (Papuan tree boa).